Reading from the N-terminus, the 492-residue chain is ATP synthase subunit beta, chloroplastic (492 aa).

Residue 170 to 177 (GGAGVGKT) participates in ATP binding.

It belongs to the ATPase alpha/beta chains family. F-type ATPases have 2 components, CF(1) - the catalytic core - and CF(0) - the membrane proton channel. CF(1) has five subunits: alpha(3), beta(3), gamma(1), delta(1), epsilon(1). CF(0) has four main subunits: a(1), b(1), b'(1) and c(9-12).

It localises to the plastid. The protein resides in the chloroplast thylakoid membrane. It carries out the reaction ATP + H2O + 4 H(+)(in) = ADP + phosphate + 5 H(+)(out). Its function is as follows. Produces ATP from ADP in the presence of a proton gradient across the membrane. The catalytic sites are hosted primarily by the beta subunits. This chain is ATP synthase subunit beta, chloroplastic, found in Marchantia polymorpha (Common liverwort).